The chain runs to 144 residues: Granulocyte-macrophage colony-stimulating factor (144 aa).

The signal sequence occupies residues 1–17; that stretch reads MWLQSLLLLGTVACSIS. O-linked (GalNAc...) serine glycans are attached at residues S22, S24, and S26. A glycan (O-linked (GalNAc...) threonine; partial) is linked at T27. N44 and N54 each carry an N-linked (GlcNAc...) asparagine glycan. Disulfide bonds link C71-C113 and C105-C138.

The protein belongs to the GM-CSF family. As to quaternary structure, monomer. The signaling GM-CSF receptor complex is a dodecamer of two head-to-head hexamers of two alpha, two beta, and two ligand subunits.

The protein localises to the secreted. Functionally, cytokine that stimulates the growth and differentiation of hematopoietic precursor cells from various lineages, including granulocytes, macrophages, eosinophils and erythrocytes. This Homo sapiens (Human) protein is Granulocyte-macrophage colony-stimulating factor (CSF2).